The primary structure comprises 305 residues: Probable pyridoxal 5'-phosphate synthase subunit pdx1 (305 aa).

Residue Asp33 coordinates D-ribose 5-phosphate. Lys90 functions as the Schiff-base intermediate with D-ribose 5-phosphate in the catalytic mechanism. Gly162 is a binding site for D-ribose 5-phosphate. Arg174 is a binding site for D-glyceraldehyde 3-phosphate. Residues Gly223 and 244 to 245 (GS) contribute to the D-ribose 5-phosphate site.

The protein belongs to the PdxS/SNZ family. As to quaternary structure, homohexamer.

It carries out the reaction aldehydo-D-ribose 5-phosphate + D-glyceraldehyde 3-phosphate + L-glutamine = pyridoxal 5'-phosphate + L-glutamate + phosphate + 3 H2O + H(+). The protein operates within cofactor biosynthesis; pyridoxal 5'-phosphate biosynthesis. In terms of biological role, catalyzes the formation of pyridoxal 5'-phosphate from ribose 5-phosphate (RBP), glyceraldehyde 3-phosphate (G3P) and ammonia. The ammonia is provided by pdx2. Can also use ribulose 5-phosphate and dihydroxyacetone phosphate as substrates, resulting from enzyme-catalyzed isomerization of RBP and G3P, respectively. In Dictyostelium discoideum (Social amoeba), this protein is Probable pyridoxal 5'-phosphate synthase subunit pdx1 (pdx1).